The chain runs to 532 residues: Collagen alpha-1(XXIII) chain (532 aa).

Over 1-23 the chain is Cytoplasmic; the sequence is MGAGERAAGGGGTQDPGAGCGAR. The chain crosses the membrane as a helical; Signal-anchor for type II membrane protein span at residues 24-45; it reads ALGALCLLLSVGSATACLLLGA. Topologically, residues 46 to 532 are extracellular; the sequence is QAAALHGRVA…GLPVPGCWHK (487 aa). The segment at 102–532 is disordered; sequence PSECICPPGP…GLPVPGCWHK (431 aa). Collagen-like domains follow at residues 108–163, 173–232, 242–297, and 313–372; these read PPGP…FGPR, GPPG…PGKK, GLPG…EQGD, and GPPG…MGLS. Composition is skewed to low complexity over residues 129 to 145 and 157 to 172; these read QSGR…DGKP and PGDF…DGAA. 3 stretches are compositionally biased toward pro residues: residues 174–184, 241–250, and 314–326; these read PPGPPGPPGAR, PGLPGPPGPK, and PPGP…PPGI. Composition is skewed to basic and acidic residues over residues 342–354 and 380–393; these read DGEK…KGDP and PKGE…DHLQ. Over residues 403–414 the composition is skewed to pro residues; that stretch reads PGPPGPPGPPGP. Collagen-like domains are found at residues 404 to 452 and 455 to 514; these read GPPG…GPPG and GLPG…PGLD. 2 stretches are compositionally biased toward basic and acidic residues: residues 427–441 and 478–495; these read DGAK…ERGP and RGEK…ERGV.

As to quaternary structure, homotrimer. Post-translationally, undergoes proteolytic cleavage by furin protease to yield a 60 kDa soluble form that forms a homotrimer and exhibits a low affinity interaction with heparin.

It is found in the cell membrane. The sequence is that of Collagen alpha-1(XXIII) chain (Col23a1) from Rattus norvegicus (Rat).